A 364-amino-acid chain; its full sequence is Aminomethyltransferase (364 aa).

This sequence belongs to the GcvT family. The glycine cleavage system is composed of four proteins: P, T, L and H.

It catalyses the reaction N(6)-[(R)-S(8)-aminomethyldihydrolipoyl]-L-lysyl-[protein] + (6S)-5,6,7,8-tetrahydrofolate = N(6)-[(R)-dihydrolipoyl]-L-lysyl-[protein] + (6R)-5,10-methylene-5,6,7,8-tetrahydrofolate + NH4(+). Functionally, the glycine cleavage system catalyzes the degradation of glycine. The protein is Aminomethyltransferase of Shewanella putrefaciens (strain CN-32 / ATCC BAA-453).